Consider the following 159-residue polypeptide: Ribosomal RNA large subunit methyltransferase H (159 aa).

S-adenosyl-L-methionine is bound by residues Leu76, Gly108, and 127–132; that span reads FSKMTF.

The protein belongs to the RNA methyltransferase RlmH family. In terms of assembly, homodimer.

The protein resides in the cytoplasm. It carries out the reaction pseudouridine(1915) in 23S rRNA + S-adenosyl-L-methionine = N(3)-methylpseudouridine(1915) in 23S rRNA + S-adenosyl-L-homocysteine + H(+). Its function is as follows. Specifically methylates the pseudouridine at position 1915 (m3Psi1915) in 23S rRNA. The sequence is that of Ribosomal RNA large subunit methyltransferase H from Oceanobacillus iheyensis (strain DSM 14371 / CIP 107618 / JCM 11309 / KCTC 3954 / HTE831).